The sequence spans 238 residues: uncharacterized protein (238 aa).

This is an uncharacterized protein from Ictaluridae (bullhead catfishes).